We begin with the raw amino-acid sequence, 136 residues long: Magnetite biomineralization protein Mms6 (136 aa).

At 1–85 (MGEMEREGAT…AVGGTIWSGK (85 aa)) the chain is on the cytoplasmic side. Residues 86–95 (GLALGLGMGL) form a GL repeat region. The helical transmembrane segment at 86 to 106 (GLALGLGMGLGAWGPLILGVV) threads the bilayer. The Lumenal portion of the chain corresponds to 107–136 (GAGAVYAYMKSRDIEAAQSDEEVELRDALS). The MIC, self-assembles, binds magnetite, Fe(2+) and Fe(3+) stretch occupies residues 115–136 (MKSRDIEAAQSDEEVELRDALS).

The protein belongs to the magnetosome Mms6 family. As to quaternary structure, full length protein oligomerizes and interacts with MamA. In terms of processing, may undergo cleavage.

It localises to the magnetosome membrane. Functionally, promotes the formation of magnetite in Fe(2+)-rich conditions, when magnetite is not readily formed. Binds both Fe(2+) and Fe(3+). May help control the production of crystals with a specific morphology. May function with MamX, MamY amd MamZ in biomineralization. The 4 genes of this operon collectively influence magnetosome size and number. This chain is Magnetite biomineralization protein Mms6, found in Magnetospirillum gryphiswaldense (strain DSM 6361 / JCM 21280 / NBRC 15271 / MSR-1).